Here is a 117-residue protein sequence, read N- to C-terminus: Large ribosomal subunit protein uL22 (117 aa).

This sequence belongs to the universal ribosomal protein uL22 family. In terms of assembly, part of the 50S ribosomal subunit.

Its function is as follows. This protein binds specifically to 23S rRNA; its binding is stimulated by other ribosomal proteins, e.g. L4, L17, and L20. It is important during the early stages of 50S assembly. It makes multiple contacts with different domains of the 23S rRNA in the assembled 50S subunit and ribosome. Functionally, the globular domain of the protein is located near the polypeptide exit tunnel on the outside of the subunit, while an extended beta-hairpin is found that lines the wall of the exit tunnel in the center of the 70S ribosome. In Lactobacillus delbrueckii subsp. bulgaricus (strain ATCC 11842 / DSM 20081 / BCRC 10696 / JCM 1002 / NBRC 13953 / NCIMB 11778 / NCTC 12712 / WDCM 00102 / Lb 14), this protein is Large ribosomal subunit protein uL22.